The following is a 599-amino-acid chain: Sulfite reductase [NADPH] flavoprotein alpha-component (599 aa).

Residues Val-64–Val-202 enclose the Flavodoxin-like domain. FMN-binding positions include Ser-70–Ala-75, Ser-117–Gly-120, and Leu-153–Cys-162. In terms of domain architecture, FAD-binding FR-type spans Asp-234–Pro-448. FAD contacts are provided by residues Thr-322, Ala-356, Arg-386–Ser-389, Thr-404–Gly-406, Tyr-410, and Gly-419–Ser-422. Residues Ser-519 to Arg-520, Lys-525 to Gln-529, and Asp-561 contribute to the NADP(+) site. FAD is bound at residue Tyr-599.

Belongs to the NADPH-dependent sulphite reductase flavoprotein subunit CysJ family. It in the N-terminal section; belongs to the flavodoxin family. The protein in the C-terminal section; belongs to the flavoprotein pyridine nucleotide cytochrome reductase family. As to quaternary structure, alpha(8)-beta(8). The alpha component is a flavoprotein, the beta component is a hemoprotein. FAD is required as a cofactor. It depends on FMN as a cofactor.

The enzyme catalyses hydrogen sulfide + 3 NADP(+) + 3 H2O = sulfite + 3 NADPH + 4 H(+). It functions in the pathway sulfur metabolism; hydrogen sulfide biosynthesis; hydrogen sulfide from sulfite (NADPH route): step 1/1. Functionally, component of the sulfite reductase complex that catalyzes the 6-electron reduction of sulfite to sulfide. This is one of several activities required for the biosynthesis of L-cysteine from sulfate. The flavoprotein component catalyzes the electron flow from NADPH -&gt; FAD -&gt; FMN to the hemoprotein component. The polypeptide is Sulfite reductase [NADPH] flavoprotein alpha-component (Salmonella typhi).